Consider the following 291-residue polypeptide: MDARAINSREKADLKYPRNTYIIGDVQGCYRELQELLELIQFDSTKDRLGFVGDLVNRGPNSLEVLRFLKSLSSPLIVLGNHDLYLLILGYGLMPEDSYEHTLHAVLQAPDKLELLEWLRHCPLIRYEKSLSAVLVHAGLPPQWNIKESILHAEEISTALKGPHYLAFLKNLFGNEPSQWKEDLEGQDRLRYICNAFTRMRFCDAKGHLDLESEGKTNQAPSRFRPWFEWRNPQEDNVDIVFGHWAALNGQSSAPHTHALDTGCAWGYKLTGINLKTKERFSVPCQSALRM.

This sequence belongs to the Ap4A hydrolase family.

The enzyme catalyses P(1),P(4)-bis(5'-adenosyl) tetraphosphate + H2O = 2 ADP + 2 H(+). Functionally, hydrolyzes diadenosine 5',5'''-P1,P4-tetraphosphate to yield ADP. This is Bis(5'-nucleosyl)-tetraphosphatase, symmetrical from Coxiella burnetii (strain CbuK_Q154) (Coxiella burnetii (strain Q154)).